A 516-amino-acid chain; its full sequence is DNA-(apurinic or apyrimidinic site) endonuclease 2 (516 aa).

Residues N8 and E47 each coordinate Mg(2+). Y155 is a catalytic residue. Mg(2+) is bound by residues D196, N198, D302, and H303. The active-site Proton donor/acceptor is D196. The active-site Proton acceptor is the H303. Polar residues predominate over residues 357–366 (QPSHQIQAQR). Residues 357-389 (QPSHQIQAQRQPRKACMHSTRLRKSQGGPKRKQ) form a disordered region. Basic residues predominate over residues 367–389 (QPRKACMHSTRLRKSQGGPKRKQ). K370 participates in a covalent cross-link: Glycyl lysine isopeptide (Lys-Gly) (interchain with G-Cter in ubiquitin). The tract at residues 389 to 396 (QKNLMSYF) is required for the interaction and colocalization with PCNA in nuclear foci in presence of oxidative-induced DNA damaging agents. Zn(2+) is bound by residues C467, H470, C493, and C507. A GRF-type zinc finger spans residues 467 to 516 (CGGHREPCVMRTVKKTGPNFGRQFYMCARPRGPPSDPSSRCNFFLWSRPS).

Belongs to the DNA repair enzymes AP/ExoA family. In terms of assembly, interacts with PCNA. This interaction is increased by misincorporation of uracil in nuclear DNA. The cofactor is Mg(2+). Mn(2+) is required as a cofactor. Ubiquitinated by the CUL9-RBX1 complex. Ubiquitinated by MKRN3 at Lys-370 leading to proteasomal degradation. Expressed in lymphocytes, thymocytes and splenocytes (at protein level). Highly expressed in the thymus and weakly expressed in the bone marrow, spleen, eye, kidney, lung, brain and uterus.

It localises to the nucleus. It is found in the cytoplasm. Its subcellular location is the mitochondrion. It carries out the reaction Exonucleolytic cleavage in the 3'- to 5'-direction to yield nucleoside 5'-phosphates.. Its activity is regulated as follows. 3'-5' exonuclease activity is activated by sodium and manganese. 3'-5' exonuclease and 3'-phosphodiesterase activities are stimulated in presence of PCNA. Functions as a weak apurinic/apyrimidinic (AP) endodeoxyribonuclease in the DNA base excision repair (BER) pathway of DNA lesions induced by oxidative and alkylating agents. Initiates repair of AP sites in DNA by catalyzing hydrolytic incision of the phosphodiester backbone immediately adjacent to the damage, generating a single-strand break with 5'-deoxyribose phosphate and 3'-hydroxyl ends. Also displays double-stranded DNA 3'-5' exonuclease, 3'-phosphodiesterase activities. Shows robust 3'-5' exonuclease activity on 3'-recessed heteroduplex DNA and is able to remove mismatched nucleotides preferentially. Shows fairly strong 3'-phosphodiesterase activity involved in the removal of 3'-damaged termini formed in DNA by oxidative agents. In the nucleus functions in the PCNA-dependent BER pathway. Plays a role in reversing blocked 3' DNA ends, problematic lesions that preclude DNA synthesis. Required for somatic hypermutation (SHM) and DNA cleavage step of class switch recombination (CSR) of immunoglobulin genes. Required for proper cell cycle progression during proliferation of peripheral lymphocytes. This chain is DNA-(apurinic or apyrimidinic site) endonuclease 2 (Apex2), found in Mus musculus (Mouse).